The primary structure comprises 223 residues: uncharacterized protein (223 aa).

This is an uncharacterized protein from Treponema pallidum (strain Nichols).